The sequence spans 805 residues: Cell division cycle 5-related protein (805 aa).

2 HTH myb-type domains span residues M1 to I58 and K59 to Q108. DNA-binding regions (H-T-H motif) lie at residues W31–L54 and W82–L104. Residues Q108 to E127 show a composition bias toward basic and acidic residues. Disordered stretches follow at residues Q108–D143, H246–K293, L409–V442, and L530–P556. Positions I142–A193 form a coiled coil. Over residues H246–D274 the composition is skewed to basic and acidic residues. Coiled-coil stretches lie at residues E511–E542 and Y678–Q804.

It belongs to the CEF1 family. As to quaternary structure, component of the precatalytic, catalytic and postcatalytic spliceosome complexes.

It is found in the nucleus. Its subcellular location is the cytoplasm. Its function is as follows. DNA-binding protein involved in cell cycle control. May act as a transcription activator. Plays a role in pre-mRNA splicing as core component of precatalytic, catalytic and postcatalytic spliceosomal complexes. May also play a role in the response to DNA damage (DDR). This is Cell division cycle 5-related protein (cdc5l) from Nematostella vectensis (Starlet sea anemone).